Consider the following 483-residue polypeptide: E3 ubiquitin-protein ligase TRIM50 (483 aa).

An RING-type zinc finger spans residues Cys-16–Arg-57. A B box-type zinc finger spans residues Thr-84–Val-125. Residues Cys-89, His-92, Cys-111, and His-117 each coordinate Zn(2+). Coiled-coil stretches lie at residues Thr-127–Asp-169 and Gly-203–Ser-236. The region spanning Asp-275–Ala-474 is the B30.2/SPRY domain. Position 372 is an N6-acetyllysine (Lys-372).

The protein belongs to the TRIM/RBCC family. Can form dimers and trimers. Interacts with several E2 ubiquitin-conjugating enzymes, including UBE2L6, UBE2E1, UBE2E3. No interaction with UBE2H. Interacts with BECN1. Interacts with SQSTM1. Interacts with NLRP3. In terms of processing, auto-ubiquitinated. Acetylated by EP300 and KAT2B. HDAC6 drives TRIM50 deacetylation. Acetylation antagonizes with TRIM50 ubiquitination.

The protein localises to the cytoplasm. The catalysed reaction is S-ubiquitinyl-[E2 ubiquitin-conjugating enzyme]-L-cysteine + [acceptor protein]-L-lysine = [E2 ubiquitin-conjugating enzyme]-L-cysteine + N(6)-ubiquitinyl-[acceptor protein]-L-lysine.. E3 ubiquitin-protein ligase that ubiquitinates Beclin-1/BECN1 in a 'Lys-63'-dependent manner enhancing its binding to ULK1. In turn, promotes starvation-induced autophagy activation. Also interacts with p62/SQSTM1 protein and thereby induces the formation and the autophagy clearance of aggresome-associated polyubiquitinated proteins through HDAC6 interaction. Also promotes NLRP3 inflammasome activation by directly inducing NLRP3 oligomerization independent of its E3 ligase function. This is E3 ubiquitin-protein ligase TRIM50 (Trim50) from Rattus norvegicus (Rat).